Reading from the N-terminus, the 335-residue chain is MTGTTLAATYGPISGADLEAELAQPRIADGDAQDAAVYERDGGAHAPPFASGGAPPDGDRADVRRAAGAGDASVRLTRVSKRYGERAVLADVDLSIGRGSFVSIVGRSGCGKSTLLRLVAELETPSAGTLVKRGDGGGALDTRIMYQEARLLPWKTVLQNVMLGLGRRAKDDARAVLDEVGLLARANDWPAQLSGGQRQRVALARALVHRPQLLLLDEPLGALDALTRIEMHALIERLWREHRFTALLVTHDVQEAVALADRVLLIEAGRIAFDQRVPLDRPRARASAAFAALEDRVLQRVLTGSDAAPAAPNAAGPEGASRGRAAPASGLRWAV.

A disordered region spans residues 29 to 61 (DGDAQDAAVYERDGGAHAPPFASGGAPPDGDRA). Residues 74 to 293 (VRLTRVSKRY…ARASAAFAAL (220 aa)) form the ABC transporter domain. 106 to 113 (GRSGCGKS) contacts ATP. The tract at residues 308–335 (APAAPNAAGPEGASRGRAAPASGLRWAV) is disordered.

The protein belongs to the ABC transporter superfamily. Aliphatic sulfonates importer (TC 3.A.1.17.2) family. In terms of assembly, the complex is composed of two ATP-binding proteins (SsuB), two transmembrane proteins (SsuC) and a solute-binding protein (SsuA).

The protein localises to the cell inner membrane. It carries out the reaction ATP + H2O + aliphatic sulfonate-[sulfonate-binding protein]Side 1 = ADP + phosphate + aliphatic sulfonateSide 2 + [sulfonate-binding protein]Side 1.. Its function is as follows. Part of the ABC transporter complex SsuABC involved in aliphatic sulfonates import. Responsible for energy coupling to the transport system. In Burkholderia pseudomallei (strain 1710b), this protein is Aliphatic sulfonates import ATP-binding protein SsuB.